Here is a 568-residue protein sequence, read N- to C-terminus: DNA ligase 2 (568 aa).

E254 is an ATP binding site. K256 (N6-AMP-lysine intermediate) is an active-site residue. Residues R261, R276, E306, F346, R425, and K431 each coordinate ATP.

Belongs to the ATP-dependent DNA ligase family. Requires Mg(2+) as cofactor.

The catalysed reaction is ATP + (deoxyribonucleotide)n-3'-hydroxyl + 5'-phospho-(deoxyribonucleotide)m = (deoxyribonucleotide)n+m + AMP + diphosphate.. In terms of biological role, DNA ligase that seals nicks in double-stranded DNA during DNA replication, DNA recombination and DNA repair. The polypeptide is DNA ligase 2 (Methanosarcina acetivorans (strain ATCC 35395 / DSM 2834 / JCM 12185 / C2A)).